The following is a 428-amino-acid chain: Enolase (428 aa).

Glutamine 163 is a (2R)-2-phosphoglycerate binding site. Catalysis depends on glutamate 205, which acts as the Proton donor. Residues aspartate 242, glutamate 285, and aspartate 312 each contribute to the Mg(2+) site. 4 residues coordinate (2R)-2-phosphoglycerate: lysine 337, arginine 366, serine 367, and lysine 388. The active-site Proton acceptor is lysine 337.

Belongs to the enolase family. Mg(2+) is required as a cofactor.

Its subcellular location is the cytoplasm. It localises to the secreted. The protein resides in the cell surface. The enzyme catalyses (2R)-2-phosphoglycerate = phosphoenolpyruvate + H2O. The protein operates within carbohydrate degradation; glycolysis; pyruvate from D-glyceraldehyde 3-phosphate: step 4/5. Catalyzes the reversible conversion of 2-phosphoglycerate (2-PG) into phosphoenolpyruvate (PEP). It is essential for the degradation of carbohydrates via glycolysis. The chain is Enolase from Neisseria meningitidis serogroup A / serotype 4A (strain DSM 15465 / Z2491).